We begin with the raw amino-acid sequence, 551 residues long: DNA double-strand break repair helicase HerA (551 aa).

Residues Arg-152, 161–166 (GAGKSN), and 507–508 (RI) each bind ATP.

It belongs to the HerA family. As to quaternary structure, homohexamer. Interacts with NurA.

It carries out the reaction Couples ATP hydrolysis with the unwinding of duplex DNA at the replication fork by translocating in the 5'-3' direction. This creates two antiparallel DNA single strands (ssDNA). The leading ssDNA polymer is the template for DNA polymerase III holoenzyme which synthesizes a continuous strand.. The catalysed reaction is ATP + H2O = ADP + phosphate + H(+). The enzyme catalyses Couples ATP hydrolysis with the unwinding of duplex DNA by translocating in the 3'-5' direction.. With respect to regulation, helicase activity is stimulated in the presence of NurA. Functionally, involved in DNA double-strand break (DSB) repair. Probably acts with NurA to stimulate resection of the 5' strand and produce the long 3' single-strand that is required for RadA loading. Has DNA-dependent ATPase activity and DNA helicase activity. The protein is DNA double-strand break repair helicase HerA of Pyrococcus furiosus (strain ATCC 43587 / DSM 3638 / JCM 8422 / Vc1).